Here is a 3477-residue protein sequence, read N- to C-terminus: Abnormal spindle-like microcephaly-associated protein (3477 aa).

The segment at 1–30 (MANRRVGRGCWEVSPTERRPPAGLRGPAAE) is disordered. Phosphoserine occurs at positions 280, 283, 367, and 392. A sufficient for interaction with KATNA1:KATNB1 region spans residues 308-409 (ITQSQIHFLS…NMAYMCTSQQ (102 aa)). The span at 415–424 (LSNENSQVPQ) shows a compositional bias: polar residues. Disordered regions lie at residues 415–443 (LSNE…ECQG) and 559–581 (KNEV…DGSM). The residue at position 425 (serine 425) is a Phosphoserine. Polar residues predominate over residues 560–570 (NEVTPSSTTAS). Serine 605 is modified (phosphoserine). In terms of domain architecture, Calponin-homology (CH) 1 spans 920 to 1056 (KASKEILLAF…LLWKIAFAFQ (137 aa)). Positions 1057-1078 (VDISLNLDQLKEEIAFLKHTKS) form a coiled coil. Serine 1103 is subject to Phosphoserine. The Calponin-homology (CH) 2 domain maps to 1110 to 1261 (SENIKLLMDW…YLSFLCARLL (152 aa)). 39 IQ domains span residues 1347-1378 (QNKA…IILQ), 1393-1422 (YLWA…MLKS), 1582-1613 (LKKT…VIIQ), 1632-1661 (TRSA…SVIK), 1655-1684 (ILTS…ATIK), 1728-1757 (MRES…AVIS), 1751-1782 (QRKA…IVIQ), 1801-1830 (VKKA…AALK), 1824-1853 (QSIA…SIIK), 1874-1903 (TKAA…AALK), 1897-1928 (EHQA…LVIQ), 1947-1978 (LRHA…IIIQ), 1970-2001 (QHKC…LLIQ), 2020-2049 (TKAA…AAVT), 2043-2074 (CNKA…IIIQ), 2093-2124 (LKKT…TFIK), 2116-2147 (MHRA…IVIQ), 2166-2197 (ILKA…TLIQ), 2189-2218 (MQTA…ITKT), 2239-2270 (LRHS…TLIQ), 2262-2293 (MHIA…ILIQ), 2311-2342 (VQNA…TFIQ), 2334-2365 (MHRA…VVIQ), 2384-2415 (QRHS…TLIQ), 2407-2438 (MHSS…IFVQ), 2457-2488 (LRKA…VLIQ), 2530-2561 (QWHS…IVIQ), 2624-2653 (QHQA…TVVS), 2665-2696 (RTQA…TLIQ), 2688-2719 (MHRA…VVIQ), 2738-2767 (VQKS…EKMA), 2859-2890 (QKRA…VVLQ), 2909-2938 (IRSS…STIK), 2932-2963 (IKNS…KIQA), 2954-2985 (KVKA…KIIQ), 3029-3060 (RHRA…LIIQ), 3079-3110 (FKKS…RLLH), 3181-3210 (RNRA…GIIK), and 3204-3235 (FTSG…IRLS).

As to quaternary structure, interacts with KATNA1 and KATNB1; katanin complex formation KATNA1:KATNB1 is required for the association.

The protein resides in the cytoplasm. It localises to the cytoskeleton. It is found in the spindle. Its subcellular location is the nucleus. Involved in mitotic spindle regulation and coordination of mitotic processes. The function in regulating microtubule dynamics at spindle poles including spindle orientation, astral microtubule density and poleward microtubule flux seems to depend on the association with the katanin complex formed by KATNA1 and KATNB1. Enhances the microtubule lattice severing activity of KATNA1 by recruiting the katanin complex to microtubules. Can block microtubule minus-end growth and reversely this function can be enhanced by the katanin complex. May have a preferential role in regulating neurogenesis. In Homo sapiens (Human), this protein is Abnormal spindle-like microcephaly-associated protein (ASPM).